A 1183-amino-acid polypeptide reads, in one-letter code: Translation initiation factor IF-2 (1183 aa).

Disordered regions lie at residues 55–512 and 538–574; these read KSKT…KVHI and ASLA…RQRR. Residues 83 to 99 show a composition bias toward basic and acidic residues; sequence TQKDQKTEPKKKNHDQT. Composition is skewed to polar residues over residues 100–143 and 165–177; these read ELSQ…QITA and KPLT…IPQS. The span at 220–229 shows a compositional bias: basic and acidic residues; it reads PKIDIQDKKP. A compositionally biased stretch (polar residues) spans 231 to 252; that stretch reads QPNNQKAKTRINQGEISPQKVG. A compositionally biased stretch (low complexity) spans 253–267; sequence QGNIQKIKSQNKQNQ. Residues 288–304 are compositionally biased toward basic and acidic residues; the sequence is IRREKPVNKPHTNEVRN. Polar residues-rich tracts occupy residues 324 to 349 and 357 to 367; these read QGLS…NRQG and NRTTQGQNRPG. Residues 485–499 show a composition bias toward basic and acidic residues; it reads GRPDWDDSAKLDALR. Composition is skewed to basic residues over residues 544–553 and 560–574; these read SKPKVGKRNN and LKKR…RQRR. Residues 675–847 form the tr-type G domain; the sequence is RRPPVVTVMG…VLLVTEVEDL (173 aa). Residues 684-691 are G1; it reads GHVDHGKT. 684–691 is a GTP binding site; sequence GHVDHGKT. Residues 709-713 form a G2 region; the sequence is GITQH. Residues 734–737 form a G3 region; sequence DTPG. GTP-binding positions include 734-738 and 788-791; these read DTPGH and NKID. A G4 region spans residues 788 to 791; sequence NKID. The tract at residues 824-826 is G5; that stretch reads SAI.

The protein belongs to the TRAFAC class translation factor GTPase superfamily. Classic translation factor GTPase family. IF-2 subfamily.

Its subcellular location is the cytoplasm. One of the essential components for the initiation of protein synthesis. Protects formylmethionyl-tRNA from spontaneous hydrolysis and promotes its binding to the 30S ribosomal subunits. Also involved in the hydrolysis of GTP during the formation of the 70S ribosomal complex. In Prochlorococcus marinus (strain NATL1A), this protein is Translation initiation factor IF-2.